We begin with the raw amino-acid sequence, 655 residues long: Golgi integral membrane protein 4 (655 aa).

The N-myristoyl glycine moiety is linked to residue Gly2. Topologically, residues 2-12 (GNGMCSRKQKR) are cytoplasmic. Residues 13 to 33 (IFQTLLLLTVVFGFLYGAMLY) form a helical; Signal-anchor for type II membrane protein membrane-spanning segment. The Lumenal segment spans residues 34–655 (LELQTQLRKA…AEKSHRRAEM (622 aa)). Positions 38–107 (TQLRKAEAVA…ETLNKGRQDS (70 aa)) are golgi targeting. Residues 66-216 (EHRSRLEKSL…KQLKDTLNRI (151 aa)) are a coiled coil. The tract at residues 80–175 (LEHKKAKEDF…QELSKLKETV (96 aa)) is endosome targeting. A disordered region spans residues 122 to 145 (KSQHEELRKQHSDLEEEHRKQGED). The segment covering 123-145 (SQHEELRKQHSDLEEEHRKQGED) has biased composition (basic and acidic residues). Positions 176–220 (YNLREENRQLRKAHQDIHTQLQDVKTQVAEYKQLKDTLNRIPSFR) are golgi targeting. Asn229 is a glycosylation site (N-linked (GlcNAc...) asparagine). Disordered stretches follow at residues 256–275 (QPNH…SSMQ) and 285–655 (EQNQ…RAEM). Basic and acidic residues-rich tracts occupy residues 261–270 (AGPRRMEEKP), 290–307 (EPRE…RKAL), 319–328 (EHLEEEHDPS), and 348–360 (LDGH…EHST). A Phosphoserine modification is found at Ser328. Positions 361-370 (KAATNFQSPY) are enriched in polar residues. Residues 381 to 398 (ARRDEEAQRLREHQEALH) are compositionally biased toward basic and acidic residues. Composition is skewed to low complexity over residues 399-423 (QQRL…MAQQ) and 433-442 (QQHQEQLRQQ). A compositionally biased stretch (basic and acidic residues) spans 468–508 (AYDRDNQRQDEAEGDPGNRQELREPGHQEGDPEVEADRAAV). The residue at position 540 (Ser540) is a Phosphoserine. Residues 567-589 (QQEDNVDEQYQDEGEEEVQEDLT) are compositionally biased toward acidic residues. Tyr576 is subject to Phosphotyrosine. Position 589 is a phosphothreonine (Thr589). Residues 590-620 (EEKKREMEHNVEETYGEHPDDKNNDGEEQGV) show a composition bias toward basic and acidic residues. Phosphotyrosine is present on Tyr633. Acidic residues predominate over residues 633–642 (YEEEEDEEDG).

Belongs to the GOLIM4 family. In terms of processing, phosphorylated by c-AMP-dependent kinases most probably in its lumenal part. O-glycosylated; modified by sialic acid residues. Post-translationally, N-glycosylated; N-glycans are of the complex type and modified by sialic acid residues. In terms of tissue distribution, expressed by spermatozoa (at protein level).

The protein localises to the golgi apparatus. Its subcellular location is the golgi stack membrane. The protein resides in the endosome membrane. It is found in the membrane. Functionally, plays a role in endosome to Golgi protein trafficking; mediates protein transport along the late endosome-bypass pathway from the early endosome to the Golgi. In Mus musculus (Mouse), this protein is Golgi integral membrane protein 4 (Golim4).